A 279-amino-acid polypeptide reads, in one-letter code: 3-methyl-2-oxobutanoate hydroxymethyltransferase (279 aa).

Asp43 and Asp82 together coordinate Mg(2+). Residues 43 to 44 (DS), Asp82, and Lys112 contribute to the 3-methyl-2-oxobutanoate site. A Mg(2+)-binding site is contributed by Glu114. Glu181 (proton acceptor) is an active-site residue.

It belongs to the PanB family. In terms of assembly, homodecamer; pentamer of dimers. It depends on Mg(2+) as a cofactor.

Its subcellular location is the cytoplasm. The enzyme catalyses 3-methyl-2-oxobutanoate + (6R)-5,10-methylene-5,6,7,8-tetrahydrofolate + H2O = 2-dehydropantoate + (6S)-5,6,7,8-tetrahydrofolate. It functions in the pathway cofactor biosynthesis; (R)-pantothenate biosynthesis; (R)-pantoate from 3-methyl-2-oxobutanoate: step 1/2. In terms of biological role, catalyzes the reversible reaction in which hydroxymethyl group from 5,10-methylenetetrahydrofolate is transferred onto alpha-ketoisovalerate to form ketopantoate. This chain is 3-methyl-2-oxobutanoate hydroxymethyltransferase, found in Lysinibacillus sphaericus (strain C3-41).